The sequence spans 567 residues: Glutamine--tRNA ligase (567 aa).

Positions 47-57 (PEPNGYLHIGH) match the 'HIGH' region motif. ATP-binding positions include 48 to 50 (EPN) and 54 to 60 (HIGHAKS). L-glutamine is bound by residues Asp80 and Tyr225. ATP is bound by residues Thr244 and 274 to 275 (RL). The 'KMSKS' region motif lies at 281–285 (ITSKR).

Belongs to the class-I aminoacyl-tRNA synthetase family. Monomer.

It localises to the cytoplasm. It carries out the reaction tRNA(Gln) + L-glutamine + ATP = L-glutaminyl-tRNA(Gln) + AMP + diphosphate. In Pseudomonas putida (strain ATCC 47054 / DSM 6125 / CFBP 8728 / NCIMB 11950 / KT2440), this protein is Glutamine--tRNA ligase.